The following is a 209-amino-acid chain: Pyridoxine/pyridoxamine 5'-phosphate oxidase (209 aa).

Residues 7-10 and Lys-64 contribute to the substrate site; that span reads REDY. FMN contacts are provided by residues 59 to 64, 74 to 75, Arg-80, and Lys-81; these read RIVLLK and FT. 3 residues coordinate substrate: Tyr-121, Arg-125, and Ser-129. FMN-binding positions include 138–139 and Trp-182; that span reads QS. 188–190 contacts substrate; it reads RLH. Residue Arg-192 participates in FMN binding.

The protein belongs to the pyridoxamine 5'-phosphate oxidase family. As to quaternary structure, homodimer. FMN serves as cofactor.

The catalysed reaction is pyridoxamine 5'-phosphate + O2 + H2O = pyridoxal 5'-phosphate + H2O2 + NH4(+). It carries out the reaction pyridoxine 5'-phosphate + O2 = pyridoxal 5'-phosphate + H2O2. It participates in cofactor metabolism; pyridoxal 5'-phosphate salvage; pyridoxal 5'-phosphate from pyridoxamine 5'-phosphate: step 1/1. It functions in the pathway cofactor metabolism; pyridoxal 5'-phosphate salvage; pyridoxal 5'-phosphate from pyridoxine 5'-phosphate: step 1/1. Functionally, catalyzes the oxidation of either pyridoxine 5'-phosphate (PNP) or pyridoxamine 5'-phosphate (PMP) into pyridoxal 5'-phosphate (PLP). The chain is Pyridoxine/pyridoxamine 5'-phosphate oxidase from Actinobacillus pleuropneumoniae serotype 3 (strain JL03).